We begin with the raw amino-acid sequence, 153 residues long: Cytochrome c-type biogenesis protein CcmE (153 aa).

Residues Met1–Arg8 lie on the Cytoplasmic side of the membrane. The helical; Signal-anchor for type II membrane protein transmembrane segment at Leu9–Ala29 threads the bilayer. At Leu30–Arg153 the chain is on the periplasmic side. Heme contacts are provided by His123 and Tyr127.

It belongs to the CcmE/CycJ family.

The protein resides in the cell inner membrane. In terms of biological role, heme chaperone required for the biogenesis of c-type cytochromes. Transiently binds heme delivered by CcmC and transfers the heme to apo-cytochromes in a process facilitated by CcmF and CcmH. The chain is Cytochrome c-type biogenesis protein CcmE from Stenotrophomonas maltophilia (strain R551-3).